The primary structure comprises 264 residues: 3-methyl-2-oxobutanoate hydroxymethyltransferase (264 aa).

Residues D45 and D84 each contribute to the Mg(2+) site. 3-methyl-2-oxobutanoate contacts are provided by residues 45 to 46 (DS), D84, and K112. E114 lines the Mg(2+) pocket. E181 (proton acceptor) is an active-site residue.

Belongs to the PanB family. As to quaternary structure, homodecamer; pentamer of dimers. Mg(2+) serves as cofactor.

Its subcellular location is the cytoplasm. The enzyme catalyses 3-methyl-2-oxobutanoate + (6R)-5,10-methylene-5,6,7,8-tetrahydrofolate + H2O = 2-dehydropantoate + (6S)-5,6,7,8-tetrahydrofolate. It participates in cofactor biosynthesis; (R)-pantothenate biosynthesis; (R)-pantoate from 3-methyl-2-oxobutanoate: step 1/2. In terms of biological role, catalyzes the reversible reaction in which hydroxymethyl group from 5,10-methylenetetrahydrofolate is transferred onto alpha-ketoisovalerate to form ketopantoate. The chain is 3-methyl-2-oxobutanoate hydroxymethyltransferase from Shewanella loihica (strain ATCC BAA-1088 / PV-4).